We begin with the raw amino-acid sequence, 446 residues long: Histidine--tRNA ligase (446 aa).

It belongs to the class-II aminoacyl-tRNA synthetase family. In terms of assembly, homodimer.

It localises to the cytoplasm. It carries out the reaction tRNA(His) + L-histidine + ATP = L-histidyl-tRNA(His) + AMP + diphosphate + H(+). The protein is Histidine--tRNA ligase of Paraburkholderia phymatum (strain DSM 17167 / CIP 108236 / LMG 21445 / STM815) (Burkholderia phymatum).